The following is a 121-amino-acid chain: RxLR effector protein PexRD2 (121 aa).

A signal peptide spans 1-18 (MRLSYVFVVFAASLLVTA). The short motif at 38-56 (RLLRKHYTAAENDGDSEAR) is the RxLR-dEER element. The interval 57–121 (ALNPEKMKTM…LNYVAEHTAV (65 aa)) is WY domain.

It belongs to the RxLR effector family.

It is found in the secreted. Its subcellular location is the host cytoplasm. The protein resides in the host nucleus. In terms of biological role, secreted effector involved in P.mirabilis colonization of host plants. May perturb the signaling of cell death associated with plant immunity, via interaction with a host MAP kinase. The protein is RxLR effector protein PexRD2 of Phytophthora mirabilis.